Here is a 315-residue protein sequence, read N- to C-terminus: Large ribosomal subunit protein uL10 (315 aa).

A compositionally biased stretch (low complexity) spans Ala-285–Pro-294. The tract at residues Ala-285–Asp-315 is disordered. Residues Glu-300–Met-309 are compositionally biased toward acidic residues.

The protein belongs to the universal ribosomal protein uL10 family. As to quaternary structure, P0 forms a pentameric complex by interaction with dimers of P1 and P2. Post-translationally, phosphorylated.

In terms of biological role, ribosomal protein P0 is the functional equivalent of E.coli protein L10. The sequence is that of Large ribosomal subunit protein uL10 (RPLP0) from Lithobates sylvaticus (Wood frog).